A 780-amino-acid chain; its full sequence is Tricorn protease-interacting factor F3 (780 aa).

Residues Glu101 and 230–234 (GAMEN) contribute to the substrate site. His265 serves as a coordination point for Zn(2+). Glu266 serves as the catalytic Proton acceptor. Zn(2+) contacts are provided by His269 and Glu288.

This sequence belongs to the peptidase M1 family. In terms of assembly, part of the tricorn proteolytic complex. Requires Zn(2+) as cofactor.

The protein localises to the cytoplasm. Its function is as follows. Proteases F1, F2 and F3 degrade oligopeptides produced by Tricorn (themselves probably produced by the proteasome), yielding free amino acids. The polypeptide is Tricorn protease-interacting factor F3 (trf3) (Thermoplasma acidophilum (strain ATCC 25905 / DSM 1728 / JCM 9062 / NBRC 15155 / AMRC-C165)).